A 182-amino-acid polypeptide reads, in one-letter code: Large ribosomal subunit protein uL5 (182 aa).

Belongs to the universal ribosomal protein uL5 family. Part of the 50S ribosomal subunit; part of the 5S rRNA/L5/L18/L25 subcomplex. Contacts the 5S rRNA and the P site tRNA. Forms a bridge to the 30S subunit in the 70S ribosome.

Functionally, this is one of the proteins that bind and probably mediate the attachment of the 5S RNA into the large ribosomal subunit, where it forms part of the central protuberance. In the 70S ribosome it contacts protein S13 of the 30S subunit (bridge B1b), connecting the 2 subunits; this bridge is implicated in subunit movement. Contacts the P site tRNA; the 5S rRNA and some of its associated proteins might help stabilize positioning of ribosome-bound tRNAs. In Thermus aquaticus, this protein is Large ribosomal subunit protein uL5.